A 459-amino-acid polypeptide reads, in one-letter code: LAS seventeen-binding protein 3 (459 aa).

The interval 219–403 is disordered; that stretch reads RPSNGGRGSF…APTSPSTSSP (185 aa). Position 227 is a phosphoserine (serine 227). The segment covering 229-242 has biased composition (acidic residues); it reads DDDEDDYYDDDDYY. Residues 243–262 show a composition bias toward low complexity; the sequence is NDIPSSFSSTDASSTRPNTR. The span at 289–300 shows a compositional bias: polar residues; sequence YSRNSRLAPTNS. Threonine 298 carries the post-translational modification Phosphothreonine. A phosphoserine mark is found at serine 300 and serine 303. The segment covering 340–350 has biased composition (acidic residues); sequence DEYDDYDDDYE. A compositionally biased stretch (basic and acidic residues) spans 351–371; sequence SGYRRGNGRDRTKDREVDDLS. Residues 372–391 show a composition bias toward polar residues; that stretch reads NRFSKSRISSASTPQTSQGR. Phosphothreonine is present on threonine 393. The span at 393–403 shows a compositional bias: low complexity; sequence TAPTSPSTSSP. Serine 397, serine 402, and serine 416 each carry phosphoserine. The region spanning 400–459 is the SH3 domain; that stretch reads TSSPKAVALYSFAGEESGDLPFRKGDVITILKKSDSQNDWWTGRVNGREGIFPANYVELV.

Belongs to the SH3YL1 family. As to quaternary structure, interacts with LAS17. Post-translationally, phosphorylation of Ser-397 is induced 2-fold in response to mating pheromone.

It is found in the cytoplasm. The protein is LAS seventeen-binding protein 3 (LSB3) of Saccharomyces cerevisiae (strain YJM789) (Baker's yeast).